Here is a 474-residue protein sequence, read N- to C-terminus: Trehalose-6-phosphate synthase (474 aa).

Arginine 10 is a binding site for D-glucose 6-phosphate. Residue 22 to 23 (GG) coordinates UDP-alpha-D-glucose. D-glucose 6-phosphate contacts are provided by tyrosine 77 and aspartate 131. Residues arginine 263 and lysine 268 each contribute to the UDP-alpha-D-glucose site. Residue arginine 301 coordinates D-glucose 6-phosphate. Residues phenylalanine 340 and 366–370 (LVAKE) contribute to the UDP-alpha-D-glucose site.

This sequence belongs to the glycosyltransferase 20 family. As to quaternary structure, homotetramer.

It carries out the reaction D-glucose 6-phosphate + UDP-alpha-D-glucose = alpha,alpha-trehalose 6-phosphate + UDP + H(+). It participates in glycan biosynthesis; trehalose biosynthesis. In terms of biological role, probably involved in the osmoprotection via the biosynthesis of trehalose. Catalyzes the transfer of glucose from UDP-alpha-D-glucose (UDP-Glc) to D-glucose 6-phosphate (Glc-6-P) to form trehalose-6-phosphate. Acts with retention of the anomeric configuration of the UDP-sugar donor. This Escherichia coli O1:K1 / APEC protein is Trehalose-6-phosphate synthase.